We begin with the raw amino-acid sequence, 72 residues long: Probable neurotoxin pcD-996 (72 aa).

The first 19 residues, 1–19 (MNYLVMISFALLLVIGVES), serve as a signal peptide directing secretion. The LCN-type CS-alpha/beta domain maps to 21–72 (RDGYFVEPDNCLVYCMPSPEICDRGCKRYGATSGFCKEFSKGENFCWCKGLR). Intrachain disulfides connect Cys-35-Cys-56, Cys-42-Cys-66, and Cys-46-Cys-68. Arg-72 is a propeptide (removed by a carboxypeptidase).

It belongs to the long (3 C-C) scorpion toxin superfamily. Expressed by the venom gland.

The protein resides in the secreted. In Androctonus australis (Sahara scorpion), this protein is Probable neurotoxin pcD-996.